We begin with the raw amino-acid sequence, 647 residues long: Acetyl-coenzyme A synthetase (647 aa).

Residues Arg-190–Lys-193, Thr-310, and Asn-334 contribute to the CoA site. Residues Gly-386–Pro-388, Asp-410–Thr-415, Asp-499, and Arg-514 contribute to the ATP site. Ser-522 is a binding site for CoA. ATP is bound at residue Arg-525. Mg(2+) is bound by residues Val-536, His-538, and Val-541. Arg-583 contacts CoA. At Lys-608 the chain carries N6-acetyllysine.

Belongs to the ATP-dependent AMP-binding enzyme family. The cofactor is Mg(2+). Post-translationally, acetylated. Deacetylation by the SIR2-homolog deacetylase activates the enzyme.

The enzyme catalyses acetate + ATP + CoA = acetyl-CoA + AMP + diphosphate. Catalyzes the conversion of acetate into acetyl-CoA (AcCoA), an essential intermediate at the junction of anabolic and catabolic pathways. AcsA undergoes a two-step reaction. In the first half reaction, AcsA combines acetate with ATP to form acetyl-adenylate (AcAMP) intermediate. In the second half reaction, it can then transfer the acetyl group from AcAMP to the sulfhydryl group of CoA, forming the product AcCoA. The sequence is that of Acetyl-coenzyme A synthetase from Xanthomonas axonopodis pv. citri (strain 306).